A 493-amino-acid chain; its full sequence is Serine/threonine-protein kinase chk-1 (493 aa).

The Protein kinase domain occupies 26–286; the sequence is YRVIRTLGEG…IEQIKTDPWF (261 aa). Residues 32–40 and Lys56 contribute to the ATP site; that span reads LGEGAFGEV. The active-site Proton acceptor is Asp150. A disordered region spans residues 308–348; the sequence is DENSPDCNISSTQQADAVSTAKRRHLETPDKVAHVERQNAS. Polar residues predominate over residues 312 to 324; that stretch reads PDCNISSTQQADA. The segment covering 333 to 344 has biased composition (basic and acidic residues); it reads LETPDKVAHVER.

It belongs to the protein kinase superfamily. CAMK Ser/Thr protein kinase family. NIM1 subfamily.

The protein localises to the cytoplasm. It is found in the nucleus. The enzyme catalyses L-seryl-[protein] + ATP = O-phospho-L-seryl-[protein] + ADP + H(+). It carries out the reaction L-threonyl-[protein] + ATP = O-phospho-L-threonyl-[protein] + ADP + H(+). In terms of biological role, serine/threonine-protein kinase which is required for checkpoint-mediated cell cycle arrest and activation of DNA repair in response to the presence of DNA damage or unreplicated DNA. May also negatively regulate cell cycle progression during unperturbed cell cycles. Required for checkpoint mediated cell cycle arrest in response to DNA damage in germline cells. Essential for embryogenesis. This chain is Serine/threonine-protein kinase chk-1 (chk-1), found in Caenorhabditis briggsae.